The primary structure comprises 157 residues: 2-C-methyl-D-erythritol 2,4-cyclodiphosphate synthase (157 aa).

Residues aspartate 9 and histidine 11 each contribute to the a divalent metal cation site. Residues 9–11 and 35–36 contribute to the 4-CDP-2-C-methyl-D-erythritol 2-phosphate site; these read DVH and HS. Histidine 43 contributes to the a divalent metal cation binding site. 4-CDP-2-C-methyl-D-erythritol 2-phosphate contacts are provided by residues 57-59, 62-66, 101-107, 133-136, phenylalanine 140, and arginine 143; these read DIG, FPDTD, AEKPKMA, and TTTE.

It belongs to the IspF family. As to quaternary structure, homotrimer. It depends on a divalent metal cation as a cofactor.

The enzyme catalyses 4-CDP-2-C-methyl-D-erythritol 2-phosphate = 2-C-methyl-D-erythritol 2,4-cyclic diphosphate + CMP. The protein operates within isoprenoid biosynthesis; isopentenyl diphosphate biosynthesis via DXP pathway; isopentenyl diphosphate from 1-deoxy-D-xylulose 5-phosphate: step 4/6. Functionally, involved in the biosynthesis of isopentenyl diphosphate (IPP) and dimethylallyl diphosphate (DMAPP), two major building blocks of isoprenoid compounds. Catalyzes the conversion of 4-diphosphocytidyl-2-C-methyl-D-erythritol 2-phosphate (CDP-ME2P) to 2-C-methyl-D-erythritol 2,4-cyclodiphosphate (ME-CPP) with a corresponding release of cytidine 5-monophosphate (CMP). The polypeptide is 2-C-methyl-D-erythritol 2,4-cyclodiphosphate synthase (Listeria monocytogenes serotype 4a (strain HCC23)).